The chain runs to 344 residues: tRNA(Ile)-lysidine synthase (344 aa).

Residue Ser43 to Ser48 participates in ATP binding.

This sequence belongs to the tRNA(Ile)-lysidine synthase family.

The protein localises to the cytoplasm. The catalysed reaction is cytidine(34) in tRNA(Ile2) + L-lysine + ATP = lysidine(34) in tRNA(Ile2) + AMP + diphosphate + H(+). Functionally, ligates lysine onto the cytidine present at position 34 of the AUA codon-specific tRNA(Ile) that contains the anticodon CAU, in an ATP-dependent manner. Cytidine is converted to lysidine, thus changing the amino acid specificity of the tRNA from methionine to isoleucine. The polypeptide is tRNA(Ile)-lysidine synthase (Bordetella bronchiseptica (strain ATCC BAA-588 / NCTC 13252 / RB50) (Alcaligenes bronchisepticus)).